The chain runs to 88 residues: UPF0335 protein Mnod_5968 (88 aa).

This sequence belongs to the UPF0335 family.

The protein is UPF0335 protein Mnod_5968 of Methylobacterium nodulans (strain LMG 21967 / CNCM I-2342 / ORS 2060).